A 360-amino-acid chain; its full sequence is G-protein coupled receptor 15 (360 aa).

Residues 1-33 are Extracellular-facing; the sequence is MDPEETSVYLDYYYATSPNPDIRETHSHVPYTS. The helical transmembrane segment at 34–54 threads the bilayer; sequence VFLPVFYTAVFLTGVLGNLVL. Topologically, residues 55 to 69 are cytoplasmic; that stretch reads MGALHFKPGSRRLID. A helical transmembrane segment spans residues 70 to 90; that stretch reads IFIINLAASDFIFLVTLPLWV. Over 91–120 the chain is Extracellular; sequence DKEASLGLWRTGSFLCKGSSYMISVNMHCS. Residues 121–141 traverse the membrane as a helical segment; the sequence is VFLLTCMSVDRYLAIVCPVVS. Topologically, residues 142-149 are cytoplasmic; the sequence is RKFRRTDC. Residues 150-170 traverse the membrane as a helical segment; sequence AYVVCASIWFISCLLGLPTLL. Residues 171 to 192 lie on the Extracellular side of the membrane; it reads SRELTLIDDKPYCAEKKATPLK. The chain crosses the membrane as a helical span at residues 193-213; that stretch reads LIWSLVALIFTFFVPLLSIVT. Residues 214-239 lie on the Cytoplasmic side of the membrane; that stretch reads CYCCIARKLCAHYQQSGKHNKKLKKS. Residues 240-260 traverse the membrane as a helical segment; that stretch reads IKIIFIVVAAFLVSWLPFNTF. Over 261–284 the chain is Extracellular; sequence KLLAIVSGLQQERYFPSAMLQLGM. Residues 285-305 traverse the membrane as a helical segment; the sequence is EVSGPLAFANSCVNPFIYYIF. At 306–360 the chain is on the cytoplasmic side; it reads DSYIRRAIVHCLCPCLKNYDFGSSTETSDSHLTKALSTFIHAEDFTRRRKRSVSL. A Phosphoserine modification is found at S359.

The protein belongs to the G-protein coupled receptor 1 family. Interacts with adapter YWHAE; this interaction promotes ER-to-Golgi transport of GPR15. Phosphorylation is necessary for YWHAE binding and efficient surface expression. Post-translationally, O-glycosylated. Sialylated O-glycans in the N-terminal tail inhibits binding of GPR15LG. In terms of processing, sulfation is required for efficient binding of GPR15LG.

The protein localises to the cell membrane. In terms of biological role, g protein-coupled receptor that plays an important role in immune homeostasis. Acts via its natural ligand GPR15LG, a chemokine-like polypeptide strongly expressed in gastrointestinal tissues. GPR15-GPR15LG signaling axis regulates intestinal homeostasis and inflammation through the migration of immune cells. Controls thereby the specific homing of T-cells, particularly FOXP3+ regulatory T-cells (Tregs), to the large intestine lamina propria. Also required for skin localization of thymus-derived dendritic epidermal T-cells. Plays an important role in mediating cytoprotective function as well as angiogenesis of thrombomodulin. Mechanistically, preferentially signals through the Gi/o pathway to inhibit adenylate cyclase activity and activate a phosphatidylinositol-calcium second messenger system that regulates the release of Ca(2+) ions from intracellular stores. The protein is G-protein coupled receptor 15 (GPR15) of Macaca mulatta (Rhesus macaque).